The sequence spans 194 residues: Peptidyl-tRNA hydrolase (194 aa).

Residue Y16 coordinates tRNA. The active-site Proton acceptor is H21. TRNA-binding residues include F67, N69, and N115.

Belongs to the PTH family. As to quaternary structure, monomer.

Its subcellular location is the cytoplasm. It carries out the reaction an N-acyl-L-alpha-aminoacyl-tRNA + H2O = an N-acyl-L-amino acid + a tRNA + H(+). Hydrolyzes ribosome-free peptidyl-tRNAs (with 1 or more amino acids incorporated), which drop off the ribosome during protein synthesis, or as a result of ribosome stalling. In terms of biological role, catalyzes the release of premature peptidyl moieties from peptidyl-tRNA molecules trapped in stalled 50S ribosomal subunits, and thus maintains levels of free tRNAs and 50S ribosomes. In Citrobacter koseri (strain ATCC BAA-895 / CDC 4225-83 / SGSC4696), this protein is Peptidyl-tRNA hydrolase.